The primary structure comprises 381 residues: MGIKGLNSIITEHVPSAIRKSDIKAFFGRKVAIDASMSLYQFLIAVRQQDGGQLSTETGETTSHLMGMFYRTLRMIDNGIKPCYVFDGKPPVLKSHELDKRTSRREETEKKLAEATEEAEKMKHERRLVKVSKEHNDEAKKLLELMGIPYVNAPGEAEAQCAELAKKGKVYAAASEDMDTLCYRTPYLLRHLTFSEARKEPIHEINTEIVLQGLELTIDQFIDLGIMLGCDYCDSIKGVGPVTALKLMKEHGSLEKIVEYIESGEANNKWKVPENWPYKEARELFVKPDVIDANEIDLKWTPPKEDELIQYLCHEKKFSEERVRSGIKRLQKGLKSGVQGRLDGFFKVVPKTKEQLEAAAAKAKLAKKNAKGAKGKVTKRR.

Residues Met1–Arg105 form an N-domain region. Mg(2+) is bound at residue Asp34. The DNA site is built by Arg47 and Arg71. Residues Asp87, Glu156, Glu158, Asp177, and Asp179 each coordinate Mg(2+). Residues Glu120 to His251 form an I-domain region. Glu156 is a DNA binding site. Positions 229 and 231 each coordinate DNA. A Mg(2+)-binding site is contributed by Asp231. Residues Val338–Phe346 are interaction with PCNA.

It belongs to the XPG/RAD2 endonuclease family. FEN1 subfamily. In terms of assembly, interacts with PCNA. Three molecules of FEN1 bind to one PCNA trimer with each molecule binding to one PCNA monomer. PCNA stimulates the nuclease activity without altering cleavage specificity. The cofactor is Mg(2+). In terms of processing, phosphorylated. Phosphorylation upon DNA damage induces relocalization to the nuclear plasma.

The protein resides in the nucleus. It localises to the nucleolus. It is found in the nucleoplasm. Its subcellular location is the mitochondrion. Its function is as follows. Structure-specific nuclease with 5'-flap endonuclease and 5'-3' exonuclease activities involved in DNA replication and repair. During DNA replication, cleaves the 5'-overhanging flap structure that is generated by displacement synthesis when DNA polymerase encounters the 5'-end of a downstream Okazaki fragment. It enters the flap from the 5'-end and then tracks to cleave the flap base, leaving a nick for ligation. Also involved in the long patch base excision repair (LP-BER) pathway, by cleaving within the apurinic/apyrimidinic (AP) site-terminated flap. Acts as a genome stabilization factor that prevents flaps from equilibrating into structures that lead to duplications and deletions. Also possesses 5'-3' exonuclease activity on nicked or gapped double-stranded DNA, and exhibits RNase H activity. Also involved in replication and repair of rDNA and in repairing mitochondrial DNA. The chain is Flap endonuclease 1 from Candida glabrata (strain ATCC 2001 / BCRC 20586 / JCM 3761 / NBRC 0622 / NRRL Y-65 / CBS 138) (Yeast).